The primary structure comprises 885 residues: DNA mismatch repair protein MutS (885 aa).

640 to 647 (GPNMGGKS) is a binding site for ATP.

Belongs to the DNA mismatch repair MutS family.

This protein is involved in the repair of mismatches in DNA. It is possible that it carries out the mismatch recognition step. This protein has a weak ATPase activity. The chain is DNA mismatch repair protein MutS from Variovorax paradoxus (strain S110).